The sequence spans 101 residues: Small ribosomal subunit protein bS18c (101 aa).

The span at 1–19 shows a compositional bias: basic residues; that stretch reads MNKSKRPFTKSKRSFRRRL. The tract at residues 1-23 is disordered; it reads MNKSKRPFTKSKRSFRRRLPPIQ.

Belongs to the bacterial ribosomal protein bS18 family. In terms of assembly, part of the 30S ribosomal subunit.

The protein localises to the plastid. The protein resides in the chloroplast. This Lobularia maritima (Sweet alyssum) protein is Small ribosomal subunit protein bS18c.